Here is a 157-residue protein sequence, read N- to C-terminus: Transcriptional repressor NrdR (157 aa).

Residues 1-22 (MKCPYCSSPDSRVINSRPSDDG) are disordered. Residues 3–34 (CPYCSSPDSRVINSRPSDDGASIRRRRECLTC) fold into a zinc finger. Residues 8–17 (SPDSRVINSR) show a composition bias toward polar residues. In terms of domain architecture, ATP-cone spans 49 to 136 (LMVVKRSGVR…VYRDFDSLER (88 aa)).

The protein belongs to the NrdR family. The cofactor is Zn(2+).

Its function is as follows. Negatively regulates transcription of bacterial ribonucleotide reductase nrd genes and operons by binding to NrdR-boxes. This Deinococcus radiodurans (strain ATCC 13939 / DSM 20539 / JCM 16871 / CCUG 27074 / LMG 4051 / NBRC 15346 / NCIMB 9279 / VKM B-1422 / R1) protein is Transcriptional repressor NrdR.